Consider the following 196-residue polypeptide: MPNSIIKKYPSKGKLFYVIGASGVGKDSLLHYARQRLANESLVFAHRYITRPVELKGENHIQLTKEEFNNRLQRGCFKFNWHSHELDYGIGVEVDRWLMQGSNVVINGSRGYLNTAVALHPGLVPVLIQVDSNLLHERLIKRGRETLEQIEKRIQRAQAFVGLTSPNMQIIENNSELSVAGEQLVSLLRNQAVKIL.

This sequence belongs to the ribose 1,5-bisphosphokinase family.

It carries out the reaction alpha-D-ribose 1,5-bisphosphate + ATP = 5-phospho-alpha-D-ribose 1-diphosphate + ADP. It functions in the pathway metabolic intermediate biosynthesis; 5-phospho-alpha-D-ribose 1-diphosphate biosynthesis; 5-phospho-alpha-D-ribose 1-diphosphate from D-ribose 5-phosphate (route II): step 3/3. Its function is as follows. Catalyzes the phosphorylation of ribose 1,5-bisphosphate to 5-phospho-D-ribosyl alpha-1-diphosphate (PRPP). The chain is Ribose 1,5-bisphosphate phosphokinase PhnN from Psychromonas ingrahamii (strain DSM 17664 / CCUG 51855 / 37).